Here is a 31-residue protein sequence, read N- to C-terminus: Cytochrome b6-f complex subunit 6 (31 aa).

A helical transmembrane segment spans residues 4–24; the sequence is LTSYFGFLLAALTITSVLFIG.

It belongs to the PetL family. The 4 large subunits of the cytochrome b6-f complex are cytochrome b6, subunit IV (17 kDa polypeptide, PetD), cytochrome f and the Rieske protein, while the 4 small subunits are PetG, PetL, PetM and PetN. The complex functions as a dimer.

It localises to the plastid. Its subcellular location is the chloroplast thylakoid membrane. Functionally, component of the cytochrome b6-f complex, which mediates electron transfer between photosystem II (PSII) and photosystem I (PSI), cyclic electron flow around PSI, and state transitions. PetL is important for photoautotrophic growth as well as for electron transfer efficiency and stability of the cytochrome b6-f complex. The protein is Cytochrome b6-f complex subunit 6 of Silene conica (Striped corn catchfly).